The chain runs to 290 residues: TP53-target gene 5 protein (290 aa).

Positions 1 to 13 (MSPSAKKRPKNSR) are enriched in basic residues. 2 disordered regions span residues 1–29 (MSPS…TEQP) and 114–178 (KLES…RQPL). 3 stretches are compositionally biased toward basic and acidic residues: residues 16 to 26 (KMQDEKLRDET), 114 to 130 (KLES…KEWK), and 138 to 167 (RNKE…RDDS).

As to quaternary structure, interacts with p53/TP53. Highly expressed in heart, brain and small intestine. Less abundant in skeletal muscle, spleen, prostate, ovary and colon. A smaller transcript is expressed specifically in the testis.

Its subcellular location is the cytoplasm. It localises to the nucleus. Functionally, may play a significant role in p53/TP53-mediating signaling pathway. This Homo sapiens (Human) protein is TP53-target gene 5 protein (TP53TG5).